Here is a 349-residue protein sequence, read N- to C-terminus: Rhodopsin (349 aa).

Over 1-33 the chain is Extracellular; the sequence is TEGPYFYIPMSNATGVVRSPYEYPQYYLVYPAA. A glycan (N-linked (GlcNAc...) asparagine) is linked at Asn12. Residues 34 to 58 traverse the membrane as a helical segment; the sequence is FAVLGAYMFFLIIFGFPVNFLTLYV. At 59-70 the chain is on the cytoplasmic side; sequence TIEHKKLRTPLN. A helical membrane pass occupies residues 71–93; sequence YILLNLAVADLFMVIGGFTTTIY. Topologically, residues 94–107 are extracellular; the sequence is TSMHGYFVLGRLGC. Cys107 and Cys184 are disulfide-bonded. Residues 108-130 form a helical membrane-spanning segment; it reads NLEGFSATLGGMISLWSLVVLAV. The 'Ionic lock' involved in activated form stabilization motif lies at 131–133; sequence ERW. The Cytoplasmic segment spans residues 131-149; that stretch reads ERWVVVCKPMSNFRFGENH. The helical transmembrane segment at 150–170 threads the bilayer; sequence AIMGVTLTWAMGLACTVPPLV. Residues 171 to 199 are Extracellular-facing; sequence GWSRYIPEGMQCSCGIDYYTRAEGFNNES. Asn197 carries N-linked (GlcNAc...) asparagine glycosylation. The chain crosses the membrane as a helical span at residues 200–221; that stretch reads FVLYMFVCHFSFPLVVIFFCYG. Residues 222-249 lie on the Cytoplasmic side of the membrane; the sequence is RLLCAVKEAAAAQQESETTQRAEREVTR. The helical transmembrane segment at 250 to 271 threads the bilayer; it reads MVILMVIGFLVCWLPYASVAWY. Over 272-283 the chain is Extracellular; sequence IFTHQGSEFGPL. The chain crosses the membrane as a helical span at residues 284 to 305; the sequence is FMTIPAFFAKSSAIYNPVIYIC. Lys293 bears the N6-(retinylidene)lysine mark. The Cytoplasmic portion of the chain corresponds to 306 to 349; that stretch reads LNKQFRQCMLTTLFCGKNPFEEEEGASSTKTEASSASSSSVSPA. The S-palmitoyl cysteine moiety is linked to residue Cys320. The disordered stretch occupies residues 326–349; the sequence is EEEEGASSTKTEASSASSSSVSPA. Low complexity predominate over residues 331 to 349; the sequence is ASSTKTEASSASSSSVSPA.

The protein belongs to the G-protein coupled receptor 1 family. Opsin subfamily. Post-translationally, phosphorylated on some or all of the serine and threonine residues present in the C-terminal region. Contains one covalently linked retinal chromophore.

It is found in the membrane. The protein resides in the cell projection. The protein localises to the cilium. Its subcellular location is the photoreceptor outer segment. Its function is as follows. Photoreceptor required for image-forming vision at low light intensity. While most salt water fish species use retinal as chromophore, most freshwater fish use 3-dehydroretinal, or a mixture of retinal and 3-dehydroretinal. Light-induced isomerization of 11-cis to all-trans retinal triggers a conformational change that activates signaling via G-proteins. Subsequent receptor phosphorylation mediates displacement of the bound G-protein alpha subunit by arrestin and terminates signaling. In Myripristis berndti (Bigscale soldierfish), this protein is Rhodopsin (rho).